The following is a 1133-amino-acid chain: Myb-binding protein 1A (1133 aa).

Disordered stretches follow at residues 1–62 (MKSK…ENTA), 718–764 (PLSK…DAES), 924–943 (GEEHSEEDQENGKQPASRQA), and 1111–1133 (KKVAKQKKQAAAKPMVVEDEEST). Basic and acidic residues-rich tracts occupy residues 20–35 (KAKEDRKRAKTQKSEA) and 50–60 (EKPAETEEKEN). Composition is skewed to acidic residues over residues 725-735 (GEEESDDELDK) and 744-762 (DDSEDEDEDEEEDEGEDDA).

This sequence belongs to the MYBBP1A family. In terms of assembly, interacts with nclb.

It is found in the cytoplasm. It localises to the nucleus. The protein resides in the nucleolus. Has a role in rRNA biogenesis, cell proliferation and tissue growth by contributing to the localization of nclb to the nucleolus. The polypeptide is Myb-binding protein 1A (Drosophila melanogaster (Fruit fly)).